A 46-amino-acid polypeptide reads, in one-letter code: uncharacterized protein (46 aa).

The tract at residues 1–46 is disordered; the sequence is MNFGIKPDVSSGPRKGGPFKELSDFSKTSPTPQQPRSLSGKSVMLP. The span at 25–40 shows a compositional bias: polar residues; that stretch reads FSKTSPTPQQPRSLSG.

This is an uncharacterized protein from Dictyostelium discoideum (Social amoeba).